The primary structure comprises 277 residues: S-formylglutathione hydrolase FrmB (277 aa).

Catalysis depends on charge relay system residues Ser145, Asp221, and His254.

Belongs to the esterase D family.

The catalysed reaction is S-formylglutathione + H2O = formate + glutathione + H(+). Its function is as follows. Serine hydrolase involved in the detoxification of formaldehyde. Hydrolyzes S-formylglutathione to glutathione and formate. This chain is S-formylglutathione hydrolase FrmB (frmB), found in Escherichia coli (strain SMS-3-5 / SECEC).